Here is a 394-residue protein sequence, read N- to C-terminus: Elongation factor Tu-A (394 aa).

The tr-type G domain occupies 10–204 (KPHVNVGTIG…ALDTYIPEPE (195 aa)). The interval 19-26 (GHVDHGKT) is G1. Position 19-26 (19-26 (GHVDHGKT)) interacts with GTP. Thr-26 contacts Mg(2+). Residues 60–64 (GITIN) form a G2 region. The segment at 81–84 (DCPG) is G3. Residues 81–85 (DCPGH) and 136–139 (NKCD) each bind GTP. The tract at residues 136–139 (NKCD) is G4. Positions 174 to 176 (SAL) are G5.

It belongs to the TRAFAC class translation factor GTPase superfamily. Classic translation factor GTPase family. EF-Tu/EF-1A subfamily. In terms of assembly, monomer.

The protein resides in the cytoplasm. It carries out the reaction GTP + H2O = GDP + phosphate + H(+). GTP hydrolase that promotes the GTP-dependent binding of aminoacyl-tRNA to the A-site of ribosomes during protein biosynthesis. This Vibrio cholerae serotype O1 (strain ATCC 39315 / El Tor Inaba N16961) protein is Elongation factor Tu-A.